Consider the following 396-residue polypeptide: N-terminal EF-hand calcium-binding protein 3 (396 aa).

Pro residues predominate over residues 14 to 34 (PPAPQPQPQTPRHPQLAPDPG). Positions 14-36 (PPAPQPQPQTPRHPQLAPDPGPA) are disordered. The region spanning 36–71 (AGHTLFQDVFRRADKNDDGKLSFEEFQNYFADGVLS) is the EF-hand domain. Ca(2+) contacts are provided by Asp49, Asn51, Asp53, Lys55, and Glu60. The required for interaction with APBA3 stretch occupies residues 181 to 190 (VEAQSRLCGS). The interval 197 to 220 (ALRSVSRSSTWSPGSSDTGRSSEA) is disordered. Residues 206–217 (TWSPGSSDTGRS) are compositionally biased toward polar residues. Positions 296-385 (LMAQRQVQVA…RAPDTLTTVF (90 aa)) constitute an ABM domain.

Interacts with the N-terminal domain of APBA2. Interacts with NEK2. Interacts with APBA3; APBA3 seems to mediate the interaction between NECAB3 and HIF1AN. Post-translationally, phosphorylated by NEK2. In terms of tissue distribution, strongly expressed in heart and skeletal muscle, moderately in brain and pancreas.

The protein localises to the golgi apparatus. Inhibits the interaction of APBA2 with amyloid-beta precursor protein (APP), and hence allows formation of amyloid-beta. May enhance the activity of HIF1A and thus promote glycolysis under normoxic conditions; the function requires its ABM domain and may implicate the stabilization of the interaction between HIF1AN and APBA3. The polypeptide is N-terminal EF-hand calcium-binding protein 3 (NECAB3) (Homo sapiens (Human)).